The chain runs to 816 residues: Glycerol-3-phosphate acyltransferase (816 aa).

Residues 298–303 (CHRSHM) carry the HXXXXD motif motif.

The protein belongs to the GPAT/DAPAT family.

It localises to the cell membrane. The catalysed reaction is sn-glycerol 3-phosphate + an acyl-CoA = a 1-acyl-sn-glycero-3-phosphate + CoA. The protein operates within phospholipid metabolism; CDP-diacylglycerol biosynthesis; CDP-diacylglycerol from sn-glycerol 3-phosphate: step 1/3. This chain is Glycerol-3-phosphate acyltransferase, found in Hamiltonella defensa subsp. Acyrthosiphon pisum (strain 5AT).